Here is a 269-residue protein sequence, read N- to C-terminus: 3-deoxy-manno-octulosonate cytidylyltransferase (269 aa).

It belongs to the KdsB family.

It localises to the cytoplasm. The catalysed reaction is 3-deoxy-alpha-D-manno-oct-2-ulosonate + CTP = CMP-3-deoxy-beta-D-manno-octulosonate + diphosphate. The protein operates within nucleotide-sugar biosynthesis; CMP-3-deoxy-D-manno-octulosonate biosynthesis; CMP-3-deoxy-D-manno-octulosonate from 3-deoxy-D-manno-octulosonate and CTP: step 1/1. Its pathway is bacterial outer membrane biogenesis; lipopolysaccharide biosynthesis. Its function is as follows. Activates KDO (a required 8-carbon sugar) for incorporation into bacterial lipopolysaccharide in Gram-negative bacteria. The sequence is that of 3-deoxy-manno-octulosonate cytidylyltransferase from Cupriavidus taiwanensis (strain DSM 17343 / BCRC 17206 / CCUG 44338 / CIP 107171 / LMG 19424 / R1) (Ralstonia taiwanensis (strain LMG 19424)).